Here is a 132-residue protein sequence, read N- to C-terminus: Small ribosomal subunit protein uS8c (132 aa).

It belongs to the universal ribosomal protein uS8 family. As to quaternary structure, part of the 30S ribosomal subunit.

It is found in the plastid. It localises to the chloroplast. In terms of biological role, one of the primary rRNA binding proteins, it binds directly to 16S rRNA central domain where it helps coordinate assembly of the platform of the 30S subunit. The sequence is that of Small ribosomal subunit protein uS8c (rps8) from Acorus calamus (Sweet flag).